The sequence spans 537 residues: Woronin body major protein hexA (537 aa).

Basic and acidic residues-rich tracts occupy residues 1–17 (MYSV…RDAQ), 59–70 (DRTSHVEREDTR), and 116–134 (DSRV…RSEN). Disordered regions lie at residues 1–20 (MYSV…QRTA), 59–79 (DRTS…PDPR), 116–200 (DSRV…KPVY), and 269–295 (PKPL…SRPS). Residues 135 to 144 (NAKQNKNKNN) are compositionally biased toward low complexity. Residues 272-281 (LETRKGDSFS) are compositionally biased toward basic and acidic residues.

It belongs to the eIF-5A family. Hex1 subfamily. Forms oligomers. Self-assembles into hexagonal rods. Binds directly or indirectly to the Woronin body tether lah.

It is found in the cell septum. The protein localises to the cytoplasm. In terms of biological role, major component of Woronin bodies, fungal-specific organelles that occlude septal pores in order to separate intact from damaged compartments. HexA binds directly or indirectly to the Woronin body tether that in turn is anchored at the rim of the septal pore. Woronin bodies are important for stress resistance and virulence. This chain is Woronin body major protein hexA, found in Aspergillus fumigatus (strain ATCC MYA-4609 / CBS 101355 / FGSC A1100 / Af293) (Neosartorya fumigata).